Here is a 373-residue protein sequence, read N- to C-terminus: Probable tRNA sulfurtransferase (373 aa).

Positions 54–158 constitute a THUMP domain; sequence NKNIEELSKV…NDVAYFYHKI (105 aa). ATP is bound by residues 176 to 177, 201 to 202, Lys256, Gly278, and Gln287; these read LF and NF.

It belongs to the ThiI family.

It is found in the cytoplasm. The catalysed reaction is [ThiI sulfur-carrier protein]-S-sulfanyl-L-cysteine + a uridine in tRNA + 2 reduced [2Fe-2S]-[ferredoxin] + ATP + H(+) = [ThiI sulfur-carrier protein]-L-cysteine + a 4-thiouridine in tRNA + 2 oxidized [2Fe-2S]-[ferredoxin] + AMP + diphosphate. It catalyses the reaction [ThiS sulfur-carrier protein]-C-terminal Gly-Gly-AMP + S-sulfanyl-L-cysteinyl-[cysteine desulfurase] + AH2 = [ThiS sulfur-carrier protein]-C-terminal-Gly-aminoethanethioate + L-cysteinyl-[cysteine desulfurase] + A + AMP + 2 H(+). It participates in cofactor biosynthesis; thiamine diphosphate biosynthesis. Catalyzes the ATP-dependent transfer of a sulfur to tRNA to produce 4-thiouridine in position 8 of tRNAs, which functions as a near-UV photosensor. Also catalyzes the transfer of sulfur to the sulfur carrier protein ThiS, forming ThiS-thiocarboxylate. This is a step in the synthesis of thiazole, in the thiamine biosynthesis pathway. The sulfur is donated as persulfide by IscS. The protein is Probable tRNA sulfurtransferase of Saccharolobus islandicus (strain M.16.27) (Sulfolobus islandicus).